A 384-amino-acid chain; its full sequence is 8-amino-7-oxononanoate synthase (384 aa).

Residue R21 coordinates substrate. 108–109 (GF) is a binding site for pyridoxal 5'-phosphate. A substrate-binding site is contributed by H133. Residues S179, H207, and T233 each coordinate pyridoxal 5'-phosphate. N6-(pyridoxal phosphate)lysine is present on K236. Substrate is bound at residue T352.

Belongs to the class-II pyridoxal-phosphate-dependent aminotransferase family. BioF subfamily. Homodimer. Requires pyridoxal 5'-phosphate as cofactor.

It catalyses the reaction 6-carboxyhexanoyl-[ACP] + L-alanine + H(+) = (8S)-8-amino-7-oxononanoate + holo-[ACP] + CO2. The protein operates within cofactor biosynthesis; biotin biosynthesis. Functionally, catalyzes the decarboxylative condensation of pimeloyl-[acyl-carrier protein] and L-alanine to produce 8-amino-7-oxononanoate (AON), [acyl-carrier protein], and carbon dioxide. In Enterobacter sp. (strain 638), this protein is 8-amino-7-oxononanoate synthase.